The chain runs to 911 residues: Desmoglein-1-gamma (911 aa).

The first 23 residues, 1–23 (MDWHSFRIAALLLTSLVVLEVNS), serve as a signal peptide directing secretion. A propeptide spanning residues 24-49 (EFQIQVRDHNAKNGTIKWHSIRRQKR) is cleaved from the precursor. Cadherin domains follow at residues 50–157 (EWIK…PPVF), 158–269 (SMTT…IPYL), and 270–389 (EQSS…QPGS). Over 50–519 (EWIKFAAACR…PNVDNVHFGP (470 aa)) the chain is Extracellular. The N-linked (GlcNAc...) (high mannose) asparagine glycan is linked to Asn110. N-linked (GlcNAc...) asparagine glycosylation occurs at Asn180. N-linked (GlcNAc...) asparagine glycosylation is present at Asn401. A helical membrane pass occupies residues 520-540 (AGIGLLIMGFLVLGLVPFLLI). Residues 541-911 (SCDCGGAPGG…GMIGNLSIPP (371 aa)) lie on the Cytoplasmic side of the membrane. Desmoglein repeat repeat units lie at residues 783–809 (AYPS…TVRE), 810–839 (SYTT…ERVV), 840–869 (GPIS…ERVI), and 870–897 (APGS…ERVI). A Desmoglein repeat 5; truncated repeat occupies 898–911 (QPTSGMIGNLSIPP).

In terms of assembly, interacts with DSC3; there is evidence to suggest that the interaction promotes cell-cell adhesion of keratinocytes. Expressed in epidermis, brain, liver, skeletal, muscle and testis.

Its subcellular location is the cell membrane. The protein resides in the cell junction. It localises to the desmosome. It is found in the cytoplasm. The protein localises to the nucleus. Component of intercellular desmosome junctions. Involved in the interaction of plaque proteins and intermediate filaments mediating cell-cell adhesion. The sequence is that of Desmoglein-1-gamma (Dsg1c) from Mus musculus (Mouse).